Consider the following 229-residue polypeptide: Putative N-acetylmannosamine-6-phosphate 2-epimerase (229 aa).

The protein belongs to the NanE family.

The catalysed reaction is an N-acyl-D-glucosamine 6-phosphate = an N-acyl-D-mannosamine 6-phosphate. It participates in amino-sugar metabolism; N-acetylneuraminate degradation; D-fructose 6-phosphate from N-acetylneuraminate: step 3/5. In terms of biological role, converts N-acetylmannosamine-6-phosphate (ManNAc-6-P) to N-acetylglucosamine-6-phosphate (GlcNAc-6-P). The chain is Putative N-acetylmannosamine-6-phosphate 2-epimerase from Escherichia coli O157:H7.